The chain runs to 100 residues: Glutamyl-tRNA(Gln) amidotransferase subunit C (100 aa).

Belongs to the GatC family. As to quaternary structure, heterotrimer of A, B and C subunits.

It catalyses the reaction L-glutamyl-tRNA(Gln) + L-glutamine + ATP + H2O = L-glutaminyl-tRNA(Gln) + L-glutamate + ADP + phosphate + H(+). The catalysed reaction is L-aspartyl-tRNA(Asn) + L-glutamine + ATP + H2O = L-asparaginyl-tRNA(Asn) + L-glutamate + ADP + phosphate + 2 H(+). Its function is as follows. Allows the formation of correctly charged Asn-tRNA(Asn) or Gln-tRNA(Gln) through the transamidation of misacylated Asp-tRNA(Asn) or Glu-tRNA(Gln) in organisms which lack either or both of asparaginyl-tRNA or glutaminyl-tRNA synthetases. The reaction takes place in the presence of glutamine and ATP through an activated phospho-Asp-tRNA(Asn) or phospho-Glu-tRNA(Gln). The sequence is that of Glutamyl-tRNA(Gln) amidotransferase subunit C from Streptococcus pyogenes serotype M1.